A 355-amino-acid polypeptide reads, in one-letter code: Uroporphyrinogen decarboxylase (355 aa).

Residues 27–31 (RQAGR), D78, Y155, S210, and H328 contribute to the substrate site.

The protein belongs to the uroporphyrinogen decarboxylase family. Homodimer.

The protein resides in the cytoplasm. The enzyme catalyses uroporphyrinogen III + 4 H(+) = coproporphyrinogen III + 4 CO2. Its pathway is porphyrin-containing compound metabolism; protoporphyrin-IX biosynthesis; coproporphyrinogen-III from 5-aminolevulinate: step 4/4. Catalyzes the decarboxylation of four acetate groups of uroporphyrinogen-III to yield coproporphyrinogen-III. This is Uroporphyrinogen decarboxylase from Ectopseudomonas mendocina (strain ymp) (Pseudomonas mendocina).